A 247-amino-acid chain; its full sequence is Protein eak-4 (247 aa).

Gly2 carries the N-myristoyl glycine lipid modification.

As to expression, expressed in the 2 embryonic head hypodermal cells XXXL/R.

It is found in the cell membrane. In terms of biological role, together with eak-6 and sdf-9, negatively regulates dauer larva formation downstream of the insulin-like receptor daf-2 and in parallel with age-1, pdk-1 and akt-1. The polypeptide is Protein eak-4 (Caenorhabditis elegans).